Reading from the N-terminus, the 812-residue chain is Probable beta-glucosidase D (812 aa).

A signal peptide spans 1 to 18 (MRVPSLSVLSFLLGTALA). Residues Asn-53 and Asn-188 are each glycosylated (N-linked (GlcNAc...) asparagine). The disordered stretch occupies residues 186–248 (ETNRTGGMGG…GMGGGMAGSS (63 aa)). The span at 191 to 207 (GGMGGGGGAPGGGGMGR) shows a compositional bias: gly residues. Over residues 211–225 (FSSSVPGGMSPTSSA) the composition is skewed to polar residues. Positions 236-245 (GGSGMGGGMA) are enriched in gly residues. Asn-296 carries N-linked (GlcNAc...) asparagine glycosylation. Asp-324 is a catalytic residue. N-linked (GlcNAc...) asparagine glycosylation is found at Asn-360, Asn-384, Asn-422, Asn-501, Asn-592, and Asn-646.

It belongs to the glycosyl hydrolase 3 family.

It is found in the secreted. The enzyme catalyses Hydrolysis of terminal, non-reducing beta-D-glucosyl residues with release of beta-D-glucose.. Its pathway is glycan metabolism; cellulose degradation. In terms of biological role, beta-glucosidases are one of a number of cellulolytic enzymes involved in the degradation of cellulosic biomass. Catalyzes the last step releasing glucose from the inhibitory cellobiose. The protein is Probable beta-glucosidase D (bglD) of Emericella nidulans (strain FGSC A4 / ATCC 38163 / CBS 112.46 / NRRL 194 / M139) (Aspergillus nidulans).